Here is a 261-residue protein sequence, read N- to C-terminus: Metallo-beta-lactamase fold-containing protein ST1585 (261 aa).

Zn(2+) is bound by residues His-58, His-60, Asp-62, His-63, His-148, Asp-165, and His-207.

Belongs to the metallo-beta-lactamase superfamily. Monomer.

The polypeptide is Metallo-beta-lactamase fold-containing protein ST1585 (Sulfurisphaera tokodaii (strain DSM 16993 / JCM 10545 / NBRC 100140 / 7) (Sulfolobus tokodaii)).